We begin with the raw amino-acid sequence, 189 residues long: DnaJ homolog subfamily C member 5G (189 aa).

One can recognise a J domain in the interval 17–98 (SLYAVLDLKK…KKRKIYDQHG (82 aa)). Residues 154–189 (PEQDSGRKYQQNVQSQPPRSGAKCDFRSEENSEDDF) form a disordered region. A compositionally biased stretch (polar residues) spans 161–171 (KYQQNVQSQPP).

Palmitoylated. As to expression, testis specific.

Its subcellular location is the membrane. The protein is DnaJ homolog subfamily C member 5G (DNAJC5G) of Homo sapiens (Human).